A 448-amino-acid chain; its full sequence is Probable glycine dehydrogenase (decarboxylating) subunit 1 (448 aa).

The protein belongs to the GcvP family. N-terminal subunit subfamily. In terms of assembly, the glycine cleavage system is composed of four proteins: P, T, L and H. In this organism, the P 'protein' is a heterodimer of two subunits.

It catalyses the reaction N(6)-[(R)-lipoyl]-L-lysyl-[glycine-cleavage complex H protein] + glycine + H(+) = N(6)-[(R)-S(8)-aminomethyldihydrolipoyl]-L-lysyl-[glycine-cleavage complex H protein] + CO2. In terms of biological role, the glycine cleavage system catalyzes the degradation of glycine. The P protein binds the alpha-amino group of glycine through its pyridoxal phosphate cofactor; CO(2) is released and the remaining methylamine moiety is then transferred to the lipoamide cofactor of the H protein. The protein is Probable glycine dehydrogenase (decarboxylating) subunit 1 of Geobacillus kaustophilus (strain HTA426).